We begin with the raw amino-acid sequence, 267 residues long: Hydroxyethylthiazole kinase 2 (267 aa).

Substrate is bound at residue Met-41. ATP-binding residues include Lys-116 and Thr-166. Gly-193 is a binding site for substrate.

The protein belongs to the Thz kinase family. Mg(2+) is required as a cofactor.

It catalyses the reaction 5-(2-hydroxyethyl)-4-methylthiazole + ATP = 4-methyl-5-(2-phosphooxyethyl)-thiazole + ADP + H(+). Its pathway is cofactor biosynthesis; thiamine diphosphate biosynthesis; 4-methyl-5-(2-phosphoethyl)-thiazole from 5-(2-hydroxyethyl)-4-methylthiazole: step 1/1. Catalyzes the phosphorylation of the hydroxyl group of 4-methyl-5-beta-hydroxyethylthiazole (THZ). This is Hydroxyethylthiazole kinase 2 from Streptococcus pneumoniae (strain 70585).